The chain runs to 117 residues: Carboxysome shell protein CcmK4 (117 aa).

Positions 5-91 (AVGSLETKGF…PHENVECVLP (87 aa)) constitute a BMC domain.

The protein belongs to the bacterial microcompartments protein family. CcmK subfamily. In terms of assembly, crystallizes as a homohexamer. Interacts stably with CcmK3, forming heterohexamers that can make dodecamers. Heterohexamers have a 1:2 CcmK3:CcmK4 stoichiometry. Upon expression in E.coli forms large aggregates.

It is found in the carboxysome. In terms of biological role, a probably essential, minor shell protein of the carboxysome, a polyhedral inclusion where RuBisCO (ribulose bisphosphate carboxylase, rbcL-rbcS) is sequestered. Hexamers form sheets that form the facets of the polyhedral carboxysome. In PCC 7418 there are several CcmK paralogs with presumably functional differences. This subunit can probably make both homohexamers and heterohexamers with CcmK3. Both hexamers can also make dodecamers, formation depends on buffer conditions. The protein is Carboxysome shell protein CcmK4 of Halothece sp. (strain PCC 7418) (Synechococcus sp. (strain PCC 7418)).